Here is a 335-residue protein sequence, read N- to C-terminus: Glyceraldehyde-3-phosphate dehydrogenase, cytosolic (335 aa).

NAD(+) is bound by residues 13-14 (RI), Asp35, and Arg80. D-glyceraldehyde 3-phosphate contacts are provided by residues 151–153 (SCT), Thr182, 211–212 (TG), and Arg234. The Nucleophile role is filled by Cys152. Asn316 contacts NAD(+).

This sequence belongs to the glyceraldehyde-3-phosphate dehydrogenase family. Homotetramer.

The protein resides in the cytoplasm. The enzyme catalyses D-glyceraldehyde 3-phosphate + phosphate + NAD(+) = (2R)-3-phospho-glyceroyl phosphate + NADH + H(+). Its pathway is carbohydrate degradation; glycolysis; pyruvate from D-glyceraldehyde 3-phosphate: step 1/5. This Chondrus crispus (Carrageen Irish moss) protein is Glyceraldehyde-3-phosphate dehydrogenase, cytosolic (GAPC).